The primary structure comprises 339 residues: uncharacterized protein (339 aa).

In terms of domain architecture, Rhodanese spans 17-111 (VRGEIKCLDV…WEDLSLPQNE (95 aa)).

This is an uncharacterized protein from Schizosaccharomyces pombe (strain 972 / ATCC 24843) (Fission yeast).